The chain runs to 131 residues: Insulin-like 3 (131 aa).

The N-terminal stretch at Met1–Ala20 is a signal peptide. Cystine bridges form between Cys34/Cys116, Cys46/Cys129, and Cys115/Cys120. A propeptide spans Pro58–His104 (c peptide like).

It belongs to the insulin family. Heterodimer of a B chain and an A chain linked by two disulfide bonds. In terms of tissue distribution, expressed in prenatal and postnatal Leydig cells. Found as well in the corpus luteum, trophoblast, fetal membranes and breast.

The protein resides in the secreted. Its function is as follows. Seems to play a role in testicular function. May be a trophic hormone with a role in testicular descent in fetal life. Is a ligand for LGR8 receptor. This Homo sapiens (Human) protein is Insulin-like 3 (INSL3).